The following is a 2552-amino-acid chain: Probable polyketide synthase 40 (2552 aa).

The 431-residue stretch at 13–443 folds into the Ketosynthase family 3 (KS3) domain; the sequence is CNKVAIIGIG…GSNCCLIVSS (431 aa). Catalysis depends on for beta-ketoacyl synthase activity residues Cys-179, His-320, and His-362. The interval 629–662 is acyl/malonyl transferase; sequence GIKPSIIVGHSLGEISSSYCSGMIDLDTFCYLIY. The For acyl/malonyl transferase activity role is filled by Ser-639. The segment at 928–1063 is N-terminal hotdog fold; that stretch reads INHLGISNSN…ANFQLFSRGQ (136 aa). Residues 928 to 1235 enclose the PKS/mFAS DH domain; the sequence is INHLGISNSN…FKSTTKIKDS (308 aa). Residue His-962 is the Proton acceptor; for dehydratase activity of the active site. The tract at residues 1087-1235 is C-terminal hotdog fold; that stretch reads NLTKLSKQEL…FKSTTKIKDS (149 aa). Asp-1149 functions as the Proton donor; for dehydratase activity in the catalytic mechanism. A Carrier domain is found at 2467–2546; that stretch reads DNVELTVDQL…SFIQLVKNSI (80 aa). An O-(pantetheine 4'-phosphoryl)serine modification is found at Ser-2505.

The cofactor is pantetheine 4'-phosphate.

Functionally, probable polyketide synthase. The chain is Probable polyketide synthase 40 (pks40) from Dictyostelium discoideum (Social amoeba).